Here is a 357-residue protein sequence, read N- to C-terminus: UDP-N-acetylglucosamine--N-acetylmuramyl-(pentapeptide) pyrophosphoryl-undecaprenol N-acetylglucosamine transferase (357 aa).

Residues 13–15, Arg-166, Ser-196, and Gln-291 contribute to the UDP-N-acetyl-alpha-D-glucosamine site; that span reads SAG.

Belongs to the glycosyltransferase 28 family. MurG subfamily.

The protein localises to the cell membrane. The enzyme catalyses di-trans,octa-cis-undecaprenyl diphospho-N-acetyl-alpha-D-muramoyl-L-alanyl-D-glutamyl-meso-2,6-diaminopimeloyl-D-alanyl-D-alanine + UDP-N-acetyl-alpha-D-glucosamine = di-trans,octa-cis-undecaprenyl diphospho-[N-acetyl-alpha-D-glucosaminyl-(1-&gt;4)]-N-acetyl-alpha-D-muramoyl-L-alanyl-D-glutamyl-meso-2,6-diaminopimeloyl-D-alanyl-D-alanine + UDP + H(+). The protein operates within cell wall biogenesis; peptidoglycan biosynthesis. Functionally, cell wall formation. Catalyzes the transfer of a GlcNAc subunit on undecaprenyl-pyrophosphoryl-MurNAc-pentapeptide (lipid intermediate I) to form undecaprenyl-pyrophosphoryl-MurNAc-(pentapeptide)GlcNAc (lipid intermediate II). In Clostridium perfringens (strain ATCC 13124 / DSM 756 / JCM 1290 / NCIMB 6125 / NCTC 8237 / Type A), this protein is UDP-N-acetylglucosamine--N-acetylmuramyl-(pentapeptide) pyrophosphoryl-undecaprenol N-acetylglucosamine transferase.